The following is a 280-amino-acid chain: Chlorophyll a-b binding protein CP29 (280 aa).

The tract at residues 1-42 (MVFKFPTPPGTQKKAGTTATKPAPKATTKKVATSTGTRSGGV) is disordered. Residue V2 is modified to N-acetylvaline. T7 is modified (phosphothreonine; in State 1 and State 2). Residues 10–37 (GTQKKAGTTATKPAPKATTKKVATSTGT) are compositionally biased toward low complexity. T17 bears the Phosphothreonine; in State 2 mark. The residue at position 33 (T33) is a Phosphothreonine; in State 1 and State 2. Y47 is a chlorophyll b binding site. Residues F73 and S79 each coordinate chlorophyll a. S103 carries the phosphoserine; in State 2 modification. Positions 137 and 140 each coordinate chlorophyll a. 2 consecutive transmembrane segments (helical) span residues 143-163 (WAML…VSWV) and 176-196 (AGLS…ILVG). Positions 183, 199, and 202 each coordinate chlorophyll b. Chlorophyll a contacts are provided by E238, H241, R243, and Q255. The chain crosses the membrane as a helical span at residues 244-264 (LAMVSFFGYGVQALSTGEGAL).

This sequence belongs to the light-harvesting chlorophyll a/b-binding (LHC) protein family. As to quaternary structure, the LHC complex consists of chlorophyll a-b binding proteins. Binds at least 14 chlorophylls (8 Chl-a and 6 Chl-b) and carotenoids such as lutein and neoxanthin. serves as cofactor. In terms of processing, reversible phosphorylation plays a role in the State transition process and determines the affinity of LHCII for PSI and PSII.

Its subcellular location is the plastid. The protein localises to the chloroplast thylakoid membrane. Functionally, the light-harvesting complex (LHC) functions as a light receptor, it captures and delivers excitation energy to photosystems with which it is closely associated. CP29 facilitates the State 1 to State 2 transition, where State I is induced by excess photosystem I (PSI) light and State 2 is induced by excess photosystem II (PSII) light. The protein is Chlorophyll a-b binding protein CP29 of Chlamydomonas reinhardtii (Chlamydomonas smithii).